Here is a 130-residue protein sequence, read N- to C-terminus: Profilin-12 (130 aa).

C13 and C115 are joined by a disulfide. Positions 81 to 97 match the Involved in PIP2 interaction motif; that stretch reads AVIRGKKGSGGITVKKT. T111 carries the post-translational modification Phosphothreonine.

Belongs to the profilin family. Occurs in many kinds of cells as a complex with monomeric actin in a 1:1 ratio. Phosphorylated by MAP kinases.

It is found in the cytoplasm. The protein resides in the cytoskeleton. Binds to actin and affects the structure of the cytoskeleton. At high concentrations, profilin prevents the polymerization of actin, whereas it enhances it at low concentrations. The polypeptide is Profilin-12 (Zea mays (Maize)).